Here is a 743-residue protein sequence, read N- to C-terminus: MAPLLVPLKCGFHMQRRKLSLLLQRSSAVQAWTFHDHRAANKRKERNTYLLSDPSRESSTWANNRGQNSQQILEAVKHLHLQERQCWHGNAGGGLSADPKNVLKEVNSSKILGAMFTYVWPKDRPDLRARVVISLSLLAGAKITNVMVPFMFKYAVDSLNQMSGHMLNLSDAPNTVVTMATAVLIGYGVSRTGSALFNELRNAVFGKVAQSSIRRIAKNVFLHLHNLDLGFHLSRQTGALSKAIDRGTRGISFVLSALVFNLGPTLFEMMLVSGILYYKCGGHFALVTLGTLSAYTAFTVAVTQWRTQFRIEMNKADNEAGNAAIDSLLNYETVKYFNNEKYEAERYDGFLKVYESSSLKTTSTLAMLNFGQSAIFSVGLTAIMVLASKGIMSGTMTVGDLVMVNGLLFQLSLPLNFLGTVYRETRQALIDMNTLFTLLSVDTKIKEKEMAPPLIVTPQEATIRFEDVYFEYLEGQKVLNGVSFEVPAGKKVAIVGGSGSGKSTIVRLLFRFYEPQQGNIYIAGQNIRDVGLESLRKAVGVVPQDAVLFHNTIFYNLMYGNINATAEDVYRVARLAGIHDAILKMPHKYDTQVGERGLKLSGGEKQRVAIARAILKNPPILLYDEATSSLDSVTEENILTSMKEMVKDRTSVFIAHRLSTIVDADEIIVLNQGKVAERGNHQTLLDTPGSLYANLWNTQNSRILSNGSKPEPVPERVSQKEEERKKLQEEIMNSVKGCGNCSC.

The transit peptide at 1–19 (MAPLLVPLKCGFHMQRRKL) directs the protein to the mitochondrion. Residues 20–131 (SLLLQRSSAV…KDRPDLRARV (112 aa)) are Mitochondrial matrix-facing. The tract at residues 45 to 64 (ERNTYLLSDPSRESSTWANN) is disordered. The ABC transmembrane type-1 domain occupies 131–427 (VVISLSLLAG…LGTVYRETRQ (297 aa)). A helical transmembrane segment spans residues 132–152 (VISLSLLAGAKITNVMVPFMF). Topologically, residues 153–168 (KYAVDSLNQMSGHMLN) are mitochondrial intermembrane. A helical membrane pass occupies residues 169-189 (LSDAPNTVVTMATAVLIGYGV). Residues 190-250 (SRTGSALFNE…SKAIDRGTRG (61 aa)) are Mitochondrial matrix-facing. The helical transmembrane segment at 251 to 271 (ISFVLSALVFNLGPTLFEMML) threads the bilayer. Topologically, residues 272-281 (VSGILYYKCG) are mitochondrial intermembrane. A helical transmembrane segment spans residues 282–302 (GHFALVTLGTLSAYTAFTVAV). The Mitochondrial matrix portion of the chain corresponds to 303-364 (TQWRTQFRIE…ESSSLKTTST (62 aa)). Residues 306 to 310 (RTQFR) and 369 to 372 (NFGQ) contribute to the glutathione site. A helical transmembrane segment spans residues 365 to 385 (LAMLNFGQSAIFSVGLTAIMV). At 386-400 (LASKGIMSGTMTVGD) the chain is on the mitochondrial intermembrane side. The chain crosses the membrane as a helical span at residues 401-421 (LVMVNGLLFQLSLPLNFLGTV). Position 419 (Gly-419) interacts with glutathione. Residues 422–743 (YRETRQALID…SVKGCGNCSC (322 aa)) lie on the Mitochondrial matrix side of the membrane. The ABC transporter domain occupies 463-697 (IRFEDVYFEY…PGSLYANLWN (235 aa)). Residues Tyr-472 and 496 to 503 (GGSGSGKS) each bind ATP. Residues 703–724 (ILSNGSKPEPVPERVSQKEEER) form a disordered region. The segment covering 712 to 724 (PVPERVSQKEEER) has biased composition (basic and acidic residues).

The protein belongs to the ABC transporter superfamily. ABCB family. Heavy Metal importer (TC 3.A.1.210) subfamily. Homodimer.

It localises to the mitochondrion inner membrane. The enzyme catalyses (glutathione)4[2Fe(III)-2S] cluster(in) + ATP + H2O = (glutathione)4[2Fe(III)-2S] cluster(out) + ADP + phosphate + H(+). Its function is as follows. Exports glutathione-coordinated iron-sulfur clusters such as [2Fe-2S]-(GS)4 cluster from the mitochondria to the cytosol in an ATP-dependent manner allowing the assembly of the cytosolic iron-sulfur (Fe/S) cluster-containing proteins and participates in iron homeostasis. May play a role in cadmium, zinc and mercury detoxification. This Danio rerio (Zebrafish) protein is Iron-sulfur clusters transporter ABCB7, mitochondrial (abcb7).